A 320-amino-acid polypeptide reads, in one-letter code: MRSAQVYRWQIPMDAGVVLRDRRLKTRDGLYVCLREGEREGWGEISPLPGFSQETWEEAQSVLLAWVNNWLAGDCELLQMPSIAFGVSCALAELADTLPQAANYRAAPLCNGDPDDLILKLADMPGEKVAKVKVGLYEAVRDGMVVNLLLEAIPDLHLRLDANRAWTPLKGQQFAKYVNPDYRHRIAFLEEPCKTRDDSRAFARETGIAIAWDESLREPDFAFVAEEGVRAVVIKPTLTGSLEKVREQVQAAHALRLTAVISSSIESSLGLTQLARIAAWLTPDTIPGLDTLDLMQAQQVRRWPGSTLPVVEVDALERLL.

Lysine 133 functions as the Proton donor in the catalytic mechanism. Residues aspartate 161, glutamate 190, and aspartate 213 each contribute to the Mg(2+) site. The Proton acceptor role is filled by lysine 235.

This sequence belongs to the mandelate racemase/muconate lactonizing enzyme family. MenC type 1 subfamily. Requires a divalent metal cation as cofactor.

The enzyme catalyses (1R,6R)-6-hydroxy-2-succinyl-cyclohexa-2,4-diene-1-carboxylate = 2-succinylbenzoate + H2O. Its pathway is quinol/quinone metabolism; 1,4-dihydroxy-2-naphthoate biosynthesis; 1,4-dihydroxy-2-naphthoate from chorismate: step 4/7. It participates in quinol/quinone metabolism; menaquinone biosynthesis. In terms of biological role, converts 2-succinyl-6-hydroxy-2,4-cyclohexadiene-1-carboxylate (SHCHC) to 2-succinylbenzoate (OSB). In Shigella boydii serotype 4 (strain Sb227), this protein is o-succinylbenzoate synthase.